Here is a 251-residue protein sequence, read N- to C-terminus: Triosephosphate isomerase (251 aa).

Position 9–11 (9–11) interacts with substrate; that stretch reads NWK. The active-site Electrophile is histidine 95. The Proton acceptor role is filled by glutamate 167. Residues glycine 173, serine 213, and 234-235 each bind substrate; that span reads GG.

Belongs to the triosephosphate isomerase family. Homodimer.

The protein localises to the cytoplasm. It carries out the reaction D-glyceraldehyde 3-phosphate = dihydroxyacetone phosphate. It functions in the pathway carbohydrate biosynthesis; gluconeogenesis. Its pathway is carbohydrate degradation; glycolysis; D-glyceraldehyde 3-phosphate from glycerone phosphate: step 1/1. In terms of biological role, involved in the gluconeogenesis. Catalyzes stereospecifically the conversion of dihydroxyacetone phosphate (DHAP) to D-glyceraldehyde-3-phosphate (G3P). In Geobacter metallireducens (strain ATCC 53774 / DSM 7210 / GS-15), this protein is Triosephosphate isomerase.